Here is a 419-residue protein sequence, read N- to C-terminus: LanC-like protein 3 homolog (419 aa).

It belongs to the LanC-like protein family.

This Drosophila melanogaster (Fruit fly) protein is LanC-like protein 3 homolog.